Here is a 474-residue protein sequence, read N- to C-terminus: Probable phenylalanine--tRNA ligase alpha subunit (474 aa).

The interval 1-150 is contains the major tRNA-Phe binding sites; the sequence is MSLSQKILEL…KRKLIYQAKE (150 aa). L-phenylalanine-binding positions include Thr308, 350–352, and Tyr390; that span reads QVE. Residue Glu392 coordinates Mg(2+). Phe416 serves as a coordination point for L-phenylalanine.

The protein belongs to the class-II aminoacyl-tRNA synthetase family. Phe-tRNA synthetase alpha subunit type 2 subfamily. In terms of assembly, tetramer of two alpha and two beta subunits. It depends on Mg(2+) as a cofactor.

It is found in the cytoplasm. It catalyses the reaction tRNA(Phe) + L-phenylalanine + ATP = L-phenylalanyl-tRNA(Phe) + AMP + diphosphate + H(+). This Vairimorpha ceranae (strain BRL01) (Microsporidian parasite) protein is Probable phenylalanine--tRNA ligase alpha subunit.